The following is a 150-amino-acid chain: UPF0260 protein PP_4587 (150 aa).

Belongs to the UPF0260 family.

The protein is UPF0260 protein PP_4587 of Pseudomonas putida (strain ATCC 47054 / DSM 6125 / CFBP 8728 / NCIMB 11950 / KT2440).